Consider the following 332-residue polypeptide: Probable class II chitinase ARB_00204 (332 aa).

The signal sequence occupies residues 1–18 (MKTPFTILAALTVATTLA). One can recognise a GH18 domain in the interval 19 to 331 (DVPDEWDIIE…NPHRKYLDSF (313 aa)). Glutamate 118 acts as the Proton donor in catalysis. An N-linked (GlcNAc...) asparagine glycan is attached at asparagine 245.

This sequence belongs to the glycosyl hydrolase 18 family. Chitinase class II subfamily.

The protein resides in the secreted. It catalyses the reaction Random endo-hydrolysis of N-acetyl-beta-D-glucosaminide (1-&gt;4)-beta-linkages in chitin and chitodextrins.. Its function is as follows. Degrades chitin and chitotriose. The sequence is that of Probable class II chitinase ARB_00204 from Arthroderma benhamiae (strain ATCC MYA-4681 / CBS 112371) (Trichophyton mentagrophytes).